The chain runs to 275 residues: Hydroxyethylthiazole kinase (275 aa).

M50 is a binding site for substrate. 2 residues coordinate ATP: R126 and S171. A200 provides a ligand contact to substrate.

It belongs to the Thz kinase family. Mg(2+) serves as cofactor.

The catalysed reaction is 5-(2-hydroxyethyl)-4-methylthiazole + ATP = 4-methyl-5-(2-phosphooxyethyl)-thiazole + ADP + H(+). It participates in cofactor biosynthesis; thiamine diphosphate biosynthesis; 4-methyl-5-(2-phosphoethyl)-thiazole from 5-(2-hydroxyethyl)-4-methylthiazole: step 1/1. In terms of biological role, catalyzes the phosphorylation of the hydroxyl group of 4-methyl-5-beta-hydroxyethylthiazole (THZ). In Acinetobacter baumannii (strain ATCC 17978 / DSM 105126 / CIP 53.77 / LMG 1025 / NCDC KC755 / 5377), this protein is Hydroxyethylthiazole kinase.